A 305-amino-acid chain; its full sequence is N-acetylneuraminate lyase 2 (305 aa).

2 residues coordinate aceneuramate: serine 47 and threonine 48. The active-site Proton donor is the tyrosine 137. Lysine 165 functions as the Schiff-base intermediate with substrate in the catalytic mechanism. Aceneuramate is bound by residues threonine 167, glycine 189, aspartate 191, glutamate 192, and serine 208.

This sequence belongs to the DapA family. NanA subfamily. In terms of assembly, homotetramer.

It is found in the cytoplasm. The enzyme catalyses aceneuramate = aldehydo-N-acetyl-D-mannosamine + pyruvate. The protein operates within amino-sugar metabolism; N-acetylneuraminate degradation; D-fructose 6-phosphate from N-acetylneuraminate: step 1/5. In terms of biological role, catalyzes the reversible aldol cleavage of N-acetylneuraminic acid (sialic acid; Neu5Ac) to form pyruvate and N-acetylmannosamine (ManNAc) via a Schiff base intermediate. This chain is N-acetylneuraminate lyase 2, found in Escherichia coli O6:H1 (strain CFT073 / ATCC 700928 / UPEC).